A 143-amino-acid chain; its full sequence is Alpha-S2-casein-like B (143 aa).

The signal sequence occupies residues 1–15 (MKFIILTCLLAVALA).

It belongs to the alpha-casein family. Mammary gland specific. Secreted in milk.

The protein resides in the secreted. Its function is as follows. Important role in the capacity of milk to transport calcium phosphate. The protein is Alpha-S2-casein-like B (Csn1s2b) of Mus musculus (Mouse).